The sequence spans 150 residues: Ribonuclease H (150 aa).

The RNase H type-1 domain maps to 1–141 (MKSIEVHTDG…VDVLARNQAI (141 aa)). Mg(2+) contacts are provided by aspartate 9, glutamate 47, aspartate 69, and aspartate 133.

The protein belongs to the RNase H family. As to quaternary structure, monomer. The cofactor is Mg(2+).

The protein localises to the cytoplasm. The enzyme catalyses Endonucleolytic cleavage to 5'-phosphomonoester.. Endonuclease that specifically degrades the RNA of RNA-DNA hybrids. This is Ribonuclease H from Xanthomonas campestris pv. campestris (strain 8004).